Reading from the N-terminus, the 904-residue chain is Copper-transporting ATPase ccc2 (904 aa).

The Cytoplasmic segment spans residues 1-172; it reads MYTTTLSVQG…GSQIRVWKIR (172 aa). The 67-residue stretch at 2–68 folds into the HMA domain; it reads YTTTLSVQGM…KIEDCGFDAS (67 aa). 2 residues coordinate Cu(+): C13 and C16. The chain crosses the membrane as a helical span at residues 173–193; the sequence is FIISISFSLAVMFLPQIFDSC. Residues 194 to 197 lie on the Lumenal, vesicle side of the membrane; that stretch reads DSMR. The helical transmembrane segment at 198-218 threads the bilayer; the sequence is AAFLVPHYFGICAGHIISLVL. Over 219–246 the chain is Cytoplasmic; that stretch reads SLPVQFGVGRVYYSAAYHALKRGTANMD. A helical transmembrane segment spans residues 247-267; it reads VLVSLGSTVAFAASIFFMILY. The Lumenal, vesicle segment spans residues 268–278; it reads SARHADNPAPI. Residues 279-296 form a helical membrane-spanning segment; the sequence is FFDTADMLLTFVTLGRYL. Residues 297–431 lie on the Cytoplasmic side of the membrane; that stretch reads ESKAKGSTSA…PIQQFADRVA (135 aa). Residues 432–452 traverse the membrane as a helical segment; that stretch reads GIFVPVIVALSISTFTFWFLF. The Lumenal, vesicle segment spans residues 453 to 469; that stretch reads TKYSSKYPSVFDDPMGK. The helical transmembrane segment at 470 to 490 threads the bilayer; the sequence is FAVCLKLTISVVVVACPCALG. At 491-805 the chain is on the cytoplasmic side; the sequence is LSTPTAVMVG…RIKMNLVWAC (315 aa). D529 acts as the 4-aspartylphosphate intermediate in catalysis. Mg(2+) contacts are provided by D742 and D746. A helical membrane pass occupies residues 806–826; the sequence is IYNFVMIPIAMGFFLPWGIYL. Residues 827–828 lie on the Lumenal, vesicle side of the membrane; it reads NP. Residues 829–849 form a helical membrane-spanning segment; that stretch reads MWASAAMMFSSLSVLASSLLL. Residues 850–904 are Cytoplasmic-facing; that stretch reads RRWKKPKSLIFSEADDVETESSTNSSVLQKVYTATRSIFGRNKSSNKYQPVANEV.

It belongs to the cation transport ATPase (P-type) (TC 3.A.3) family. Type IB subfamily.

Its subcellular location is the golgi apparatus. The protein resides in the trans-Golgi network membrane. The enzyme catalyses Cu(+)(in) + ATP + H2O = Cu(+)(out) + ADP + phosphate + H(+). Probably involved in copper transport and in the regulation of cellular copper level. Retrieves copper from the metallochaperone atx1 and incorporates it into trans-Golgi vesicles. The protein is Copper-transporting ATPase ccc2 (ccc2) of Schizosaccharomyces pombe (strain 972 / ATCC 24843) (Fission yeast).